Consider the following 389-residue polypeptide: Arginine biosynthesis bifunctional protein ArgJ (389 aa).

Substrate-binding residues include threonine 150, lysine 173, threonine 184, glutamate 263, asparagine 384, and threonine 389. Threonine 184 acts as the Nucleophile in catalysis.

The protein belongs to the ArgJ family. In terms of assembly, heterotetramer of two alpha and two beta chains.

It is found in the cytoplasm. The enzyme catalyses N(2)-acetyl-L-ornithine + L-glutamate = N-acetyl-L-glutamate + L-ornithine. It carries out the reaction L-glutamate + acetyl-CoA = N-acetyl-L-glutamate + CoA + H(+). It participates in amino-acid biosynthesis; L-arginine biosynthesis; L-ornithine and N-acetyl-L-glutamate from L-glutamate and N(2)-acetyl-L-ornithine (cyclic): step 1/1. Its pathway is amino-acid biosynthesis; L-arginine biosynthesis; N(2)-acetyl-L-ornithine from L-glutamate: step 1/4. Its function is as follows. Catalyzes two activities which are involved in the cyclic version of arginine biosynthesis: the synthesis of N-acetylglutamate from glutamate and acetyl-CoA as the acetyl donor, and of ornithine by transacetylation between N(2)-acetylornithine and glutamate. This chain is Arginine biosynthesis bifunctional protein ArgJ, found in Deinococcus radiodurans (strain ATCC 13939 / DSM 20539 / JCM 16871 / CCUG 27074 / LMG 4051 / NBRC 15346 / NCIMB 9279 / VKM B-1422 / R1).